Reading from the N-terminus, the 127-residue chain is DNA-directed RNA polymerase subunit omega (127 aa).

This sequence belongs to the RNA polymerase subunit omega family. As to quaternary structure, the RNAP catalytic core consists of 2 alpha, 1 beta, 1 beta' and 1 omega subunit. When a sigma factor is associated with the core the holoenzyme is formed, which can initiate transcription.

The catalysed reaction is RNA(n) + a ribonucleoside 5'-triphosphate = RNA(n+1) + diphosphate. Functionally, promotes RNA polymerase assembly. Latches the N- and C-terminal regions of the beta' subunit thereby facilitating its interaction with the beta and alpha subunits. The polypeptide is DNA-directed RNA polymerase subunit omega (rpoZ) (Rickettsia prowazekii (strain Madrid E)).